The following is a 202-amino-acid chain: MADVMPSRTGQVSRKTNETAISVSVNVDGTGVSKIATGVGFFDHMLDQLSRHSLIDMEIKAEGDLHVDDHHTVEDTGIAIGQALAKALGDRRGITRYASIDLAMDETMTRAAVDVSGRPFLVWNVTFTSPKIGTFDTELVREFFQALAQHAGITLHVQNIYGANNHHVAETCFKSVARVLRTATEIDPRQAGRVPSTKGTLA.

It belongs to the imidazoleglycerol-phosphate dehydratase family.

The protein localises to the cytoplasm. It carries out the reaction D-erythro-1-(imidazol-4-yl)glycerol 3-phosphate = 3-(imidazol-4-yl)-2-oxopropyl phosphate + H2O. It participates in amino-acid biosynthesis; L-histidine biosynthesis; L-histidine from 5-phospho-alpha-D-ribose 1-diphosphate: step 6/9. The polypeptide is Imidazoleglycerol-phosphate dehydratase (Rhizobium meliloti (strain 1021) (Ensifer meliloti)).